Reading from the N-terminus, the 541-residue chain is Putative apolipoprotein N-acyltransferase (541 aa).

Transmembrane regions (helical) follow at residues 31–51, 65–85, 89–109, 144–164, 181–201, and 215–235; these read PLPA…AAHA, GWLF…VSMH, GLAA…LALF, AACW…FPWL, LLGV…LAGL, and LAAG…QFSW. In terms of domain architecture, CN hydrolase spans 248–511; the sequence is VQGNVEQSQK…AGVLPVAVQG (264 aa). The active-site Proton acceptor is the Glu292. Residue Lys366 is part of the active site. Cys416 serves as the catalytic Nucleophile.

The protein belongs to the CN hydrolase family. Apolipoprotein N-acyltransferase subfamily.

The protein localises to the cell inner membrane. The catalysed reaction is N-terminal S-1,2-diacyl-sn-glyceryl-L-cysteinyl-[lipoprotein] + a glycerophospholipid = N-acyl-S-1,2-diacyl-sn-glyceryl-L-cysteinyl-[lipoprotein] + a 2-acyl-sn-glycero-3-phospholipid + H(+). It functions in the pathway protein modification; lipoprotein biosynthesis (N-acyl transfer). In terms of biological role, catalyzes the phospholipid dependent N-acylation of the N-terminal cysteine of apolipoprotein, the last step in lipoprotein maturation. This Bordetella parapertussis (strain 12822 / ATCC BAA-587 / NCTC 13253) protein is Putative apolipoprotein N-acyltransferase.